We begin with the raw amino-acid sequence, 484 residues long: Suppressor of fused homolog (484 aa).

Residues 1-21 are disordered; sequence MAELRPSVAPGPAAPPASGPS. Over residues 12–21 the composition is skewed to pro residues; it reads PAAPPASGPS. Lys257 is covalently cross-linked (Glycyl lysine isopeptide (Lys-Gly) (interchain with G-Cter in ubiquitin)). Residues 279-360 form a disordered region; sequence SRPPEDEEDS…SSTAIIPHEL (82 aa). Ser301 is modified (phosphoserine). N6-acetyllysine is present on Lys303. A Glycyl lysine isopeptide (Lys-Gly) (interchain with G-Cter in SUMO2) cross-link involves residue Lys321. Residues 336–347 are compositionally biased toward basic and acidic residues; sequence THDRAPSRKDSL. 3 positions are modified to phosphoserine: Ser342, Ser346, and Ser352. At Thr353 the chain carries Phosphothreonine. The residue at position 481 (Ser481) is a Phosphoserine.

It belongs to the SUFU family. May form homodimers. Interacts with ULK3; inactivating the protein kinase activity of ULK3. Interacts with RAB23. Part of a DNA-bound corepressor complex containing SAP18, GLI1 and SIN3. Part of a complex containing CTNNB1. Binds BTRC, GLI2, GLI3, SAP18 and STK36. Binds both free and DNA-bound GLI1. Interacts with KIF7. Interacts with GLI3FL and this interaction regulates the formation of either repressor or activator forms of GLI3. Its association with GLI3FL is regulated by Hh signaling and dissociation of the SUFU-GLI3 interaction requires the presence of the ciliary motor KIF3A. Polyubiquitinated at Lys-257 by the SCF(FBXL17) complex, leading to its subsequent degradation and allowing the release of GLI1 for proper hedgehog/smoothened signal transduction. Ubiquitination is impaired by phosphorylation at Ser-342, Ser-346, Ser-352 and Thr-353. Post-translationally, phosphorylation at Ser-342, Ser-346, Ser-352 and Thr-353 prevents ubiquitination by the SCF(FBXL17) complex. In terms of tissue distribution, widely expressed in adult and fetal tissues.

Its subcellular location is the cytoplasm. It localises to the nucleus. Negative regulator in the hedgehog/smoothened signaling pathway. Down-regulates GLI1-mediated transactivation of target genes. Part of a corepressor complex that acts on DNA-bound GLI1. May also act by linking GLI1 to BTRC and thereby targeting GLI1 to degradation by the proteasome. Sequesters GLI1, GLI2 and GLI3 in the cytoplasm, this effect is overcome by binding of STK36 to both SUFU and a GLI protein. Negative regulator of beta-catenin signaling. Regulates the formation of either the repressor form (GLI3R) or the activator form (GLI3A) of the full-length form of GLI3 (GLI3FL). GLI3FL is complexed with SUFU in the cytoplasm and is maintained in a neutral state. Without the Hh signal, the SUFU-GLI3 complex is recruited to cilia, leading to the efficient processing of GLI3FL into GLI3R. When Hh signaling is initiated, SUFU dissociates from GLI3FL and the latter translocates to the nucleus, where it is phosphorylated, destabilized, and converted to a transcriptional activator (GLI3A). Required for normal embryonic development. Required for the proper formation of hair follicles and the control of epidermal differentiation. The sequence is that of Suppressor of fused homolog from Mus musculus (Mouse).